The primary structure comprises 55 residues: Photosystem II reaction center protein K (55 aa).

The propeptide occupies 1-18; it reads MFYIHLENTFDLSSTILV. A helical transmembrane segment spans residues 26-46; sequence IFDPIVDVMPIIPLFFFLLAF.

It belongs to the PsbK family. PSII is composed of 1 copy each of membrane proteins PsbA, PsbB, PsbC, PsbD, PsbE, PsbF, PsbH, PsbI, PsbJ, PsbK, PsbL, PsbM, PsbT, PsbX, PsbY, PsbZ, Psb30/Ycf12, at least 3 peripheral proteins of the oxygen-evolving complex and a large number of cofactors. It forms dimeric complexes.

The protein resides in the plastid. It is found in the chloroplast thylakoid membrane. In terms of biological role, one of the components of the core complex of photosystem II (PSII). PSII is a light-driven water:plastoquinone oxidoreductase that uses light energy to abstract electrons from H(2)O, generating O(2) and a proton gradient subsequently used for ATP formation. It consists of a core antenna complex that captures photons, and an electron transfer chain that converts photonic excitation into a charge separation. The chain is Photosystem II reaction center protein K from Anthoceros angustus (Hornwort).